The following is a 327-amino-acid chain: MTDLSDFVANAQKEIKNAQNTEALDLIRVSYFGKKGHFSTHMASLSQLSVEDRPAAGRVINQAKKQIQQWLDTRKKTLQSELLARRLSSEIIDVSLPGRRLQHGGLHPVTLTIQRIECFFKKWGFSVESGPEIEDSEHNFDALNIPSHHPARTEQDTFWFDSERLLRTQTSGVQIRTMKKKGPPLRVIAPGRVYRHDYDQTHTPMFHQMEGLILDSDISFANLKNTLQCFLQYFFQKELPTRFRPSYFPFTEPSAEVDVMTQNGEWLEVLGCGMVHPNILTHLNIDPEHYSGFAFGMGIERLAMIAYGVTDLRAFFENDVRFLKQFK.

Glu-252 provides a ligand contact to Mg(2+).

Belongs to the class-II aminoacyl-tRNA synthetase family. Phe-tRNA synthetase alpha subunit type 1 subfamily. In terms of assembly, tetramer of two alpha and two beta subunits. Mg(2+) is required as a cofactor.

The protein resides in the cytoplasm. It carries out the reaction tRNA(Phe) + L-phenylalanine + ATP = L-phenylalanyl-tRNA(Phe) + AMP + diphosphate + H(+). The chain is Phenylalanine--tRNA ligase alpha subunit from Hamiltonella defensa subsp. Acyrthosiphon pisum (strain 5AT).